Consider the following 2382-residue polypeptide: Nonribosomal peptide synthetase chyA (2382 aa).

The adenylation 1 stretch occupies residues 204-607 (QKCATQPESI…LGRKDHQVKI (404 aa)). The Carrier 1 domain occupies 745-821 (TPTTQNQRIL…DMASVLVKDH (77 aa)). Ser782 is subject to O-(pantetheine 4'-phosphoryl)serine. The interval 857–1269 (EDVYPCTHMQ…LVPPEDMATL (413 aa)) is condensation 1. Positions 1294–1687 (GQPDTLAIHS…VGRKDDQVKL (394 aa)) are adenylation 2. Residues 1833–1909 (VPVSIHGRKV…GLSLKCATEN (77 aa)) form the Carrier 2 domain. Ser1870 is modified (O-(pantetheine 4'-phosphoryl)serine). The tract at residues 1967–2373 (MTLHNFYSRY…FSDVIESLAS (407 aa)) is condensation 2.

It belongs to the NRP synthetase family.

The protein operates within pigment biosynthesis. Nonribosomal peptide synthetase; part of the gene cluster that mediates the biosynthesis of the yellow pigment chrysogine. the NRPS chyA mediates the condensation of anthranilic acid and alanine into the intermediate 2-(2-aminopropanamido)benzoic acid. The remainder of the pathway is highly branched yielding at least 13 chrysogine-related compounds. The malonyl transferase chyE converts 2-(2-aminopropanamido)benzoic acid and 2-(2-aminopropanamido)benzamidine into 2-(2-(2-carboxyacetamido)propanamido)benzoic acid and 3-((1-((2-carbamoylphenyl)amino)-1-oxopropan-2-yl)amino)-3-oxopropanoic acid, respectively. ChyD is an amidase, being responsible for the amidation of the carboxylic acid moiety of 2-(2-aminopropanamido)benzoic acid, 2-(2-(2-carboxyacetamido)propanamido)benzoic acid and 2-(2-((4-amino-1-carboxy-4-oxobutyl)amino)propanamido)benzoic acid. ChyC is involved in the same reactions as ChyD, but plays a more minor role in the amidation reactions compared to chyD. The oxidoreductases chyH and chyM are involved in oxidation reactions that form N-pyruvoylanthranilamide from 2-(2-aminopropanamido)benzamidine and (1-((2-carbamoylphenyl)amino)-1-oxopropan-2-yl)glutamine, respectively. N-pyruvoylanthranilamide is further converted via two further branches in the pathway, yielding chrysogine and additional chrysogine-related coumpounds. Chrysogine is likely formed by a spontaneous ring closure from N-pyruvoylanthranilamide. The chain is Nonribosomal peptide synthetase chyA from Penicillium rubens (strain ATCC 28089 / DSM 1075 / NRRL 1951 / Wisconsin 54-1255) (Penicillium chrysogenum).